The primary structure comprises 674 residues: YAP1-binding protein 1 (674 aa).

The protein belongs to the YBP1 family. Interacts with YAP1. Forms a peroxide stress induced complex with YAP1 in the cytoplasm. Systematic proteome-wide 2-hybrid interaction studies suggest that YAP1, HYR1/GPX3, and YBP1 all interact with the nuclear pore complex subunit NUP116, which is involved in nucleocytoplasmic transport.

Its subcellular location is the cytoplasm. Its function is as follows. Involved in oxidative stress response and redox homeostasis. Required for hydrogen peroxide-induced oxidation and nuclear localization (activation) of YAP1. Functions probably in concert with HYP1/GPX3, the actual YAP1 modifying enzyme. YBP1 is not required for HYP1/GPX3-independent, diamide-induced oxidation of YAP1. The chain is YAP1-binding protein 1 from Saccharomyces cerevisiae (strain ATCC 204508 / S288c) (Baker's yeast).